The chain runs to 299 residues: ATP phosphoribosyltransferase (299 aa).

This sequence belongs to the ATP phosphoribosyltransferase family. Long subfamily. As to quaternary structure, equilibrium between an active dimeric form, an inactive hexameric form and higher aggregates. Interconversion between the various forms is largely reversible and is influenced by the natural substrates and inhibitors of the enzyme. Requires Mg(2+) as cofactor.

It localises to the cytoplasm. It catalyses the reaction 1-(5-phospho-beta-D-ribosyl)-ATP + diphosphate = 5-phospho-alpha-D-ribose 1-diphosphate + ATP. It functions in the pathway amino-acid biosynthesis; L-histidine biosynthesis; L-histidine from 5-phospho-alpha-D-ribose 1-diphosphate: step 1/9. Feedback inhibited by histidine. Its function is as follows. Catalyzes the condensation of ATP and 5-phosphoribose 1-diphosphate to form N'-(5'-phosphoribosyl)-ATP (PR-ATP). Has a crucial role in the pathway because the rate of histidine biosynthesis seems to be controlled primarily by regulation of HisG enzymatic activity. This Escherichia coli O17:K52:H18 (strain UMN026 / ExPEC) protein is ATP phosphoribosyltransferase.